A 363-amino-acid polypeptide reads, in one-letter code: Probable F-box protein At4g22165 (363 aa).

Residues 7 to 56 (PNTWSELPLDLLNLVFKRLSLVNFQRAKSVCSTRYSVSRQCVPERQIALL) enclose the F-box domain.

This Arabidopsis thaliana (Mouse-ear cress) protein is Probable F-box protein At4g22165.